We begin with the raw amino-acid sequence, 159 residues long: Transcriptional repressor NrdR (159 aa).

A zinc finger spans residues 3-34 (CPFCRHEDTQVVDSRVSEDGAAIRRRRRCSAC). Positions 49–139 (PAVVKKDGSR…VYRRFEDVSE (91 aa)) constitute an ATP-cone domain.

The protein belongs to the NrdR family. Requires Zn(2+) as cofactor.

In terms of biological role, negatively regulates transcription of bacterial ribonucleotide reductase nrd genes and operons by binding to NrdR-boxes. The sequence is that of Transcriptional repressor NrdR from Burkholderia ambifaria (strain MC40-6).